A 475-amino-acid chain; its full sequence is Cytosolic non-specific dipeptidase (475 aa).

A Phosphoserine modification is found at Ser-58. Mn(2+) is bound at residue His-99. Asp-101 is an active-site residue. Mn(2+) is bound at residue Asp-132. Residue Glu-166 is the Proton acceptor of the active site. Substrate-binding positions include 166–167 (EE), Asp-195, and His-228. Residues Glu-167 and Asp-195 each coordinate Mn(2+). Ser-299 is modified (phosphoserine). Substrate contacts are provided by Thr-330, Arg-343, Ser-417, and His-445. His-445 is a Mn(2+) binding site.

This sequence belongs to the peptidase M20A family. In terms of assembly, homodimer. Mn(2+) is required as a cofactor. Highly expressed in the parafascicular nucleus of the thalamus, tuberomammillary nucleus of the hypothalamus and the mitral cell layer of the olfactory bulb.

Its subcellular location is the cytoplasm. The catalysed reaction is Hydrolysis of dipeptides, preferentially hydrophobic dipeptides including prolyl amino acids.. It carries out the reaction L-threonyl-L-threonine + H2O = 2 L-threonine. It catalyses the reaction L-threonyl-L-serine + H2O = L-threonine + L-serine. The enzyme catalyses L-seryl-L-threonine + H2O = L-threonine + L-serine. The catalysed reaction is L-cysteinylglycine + H2O = L-cysteine + glycine. It carries out the reaction L-alanyl-L-cysteine + H2O = L-cysteine + L-alanine. It catalyses the reaction (S)-lactate + L-phenylalanine = N-[(S)-lactoyl]-L-phenylalanine + H2O. Its activity is regulated as follows. Inhibited by bestatin. Its function is as follows. Catalyzes the peptide bond hydrolysis in dipeptides, displaying a non-redundant activity toward threonyl dipeptides. Mediates threonyl dipeptide catabolism in a tissue-specific way. Has high dipeptidase activity toward cysteinylglycine, an intermediate metabolite in glutathione metabolism. Metabolizes N-lactoyl-amino acids, both through hydrolysis to form lactic acid and amino acids, as well as through their formation by reverse proteolysis. Plays a role in the regulation of cell cycle arrest and apoptosis. The protein is Cytosolic non-specific dipeptidase (Cndp2) of Mus musculus (Mouse).